A 455-amino-acid polypeptide reads, in one-letter code: Probable alpha-galactosidase B (455 aa).

Residues 1-16 form the signal peptide; it reads MIEFLALITLISRANA. Cystine bridges form between cysteine 39–cysteine 71 and cysteine 121–cysteine 151. A glycan (N-linked (GlcNAc...) asparagine) is linked at asparagine 42. The active-site Nucleophile is the aspartate 149. N-linked (GlcNAc...) asparagine glycosylation is found at asparagine 177 and asparagine 192. Position 222-226 (222-226) interacts with substrate; it reads NWGNA. Aspartate 244 (proton donor) is an active-site residue. A glycan (N-linked (GlcNAc...) asparagine) is linked at asparagine 395.

This sequence belongs to the glycosyl hydrolase 27 family.

The protein resides in the secreted. The catalysed reaction is Hydrolysis of terminal, non-reducing alpha-D-galactose residues in alpha-D-galactosides, including galactose oligosaccharides, galactomannans and galactolipids.. Its function is as follows. Hydrolyzes a variety of simple alpha-D-galactoside as well as more complex molecules such as oligosaccharides and polysaccharides. The sequence is that of Probable alpha-galactosidase B (aglB) from Emericella nidulans (strain FGSC A4 / ATCC 38163 / CBS 112.46 / NRRL 194 / M139) (Aspergillus nidulans).